A 771-amino-acid polypeptide reads, in one-letter code: Myotubularin-related protein 10 (771 aa).

One can recognise a Myotubularin phosphatase domain in the interval 217 to 657 (FETYSDWDRE…THIKLWKLCY (441 aa)). 2 positions are modified to phosphoserine: Ser-603 and Ser-745.

Belongs to the protein-tyrosine phosphatase family. Non-receptor class myotubularin subfamily.

The polypeptide is Myotubularin-related protein 10 (Mtmr10) (Mus musculus (Mouse)).